The following is a 321-amino-acid chain: Biotin synthase (321 aa).

Residues Phe45–Ala271 form the Radical SAM core domain. [4Fe-4S] cluster-binding residues include Cys63, Cys67, and Cys70. [2Fe-2S] cluster is bound by residues Cys106, Cys139, Cys199, and Arg269.

The protein belongs to the radical SAM superfamily. Biotin synthase family. In terms of assembly, homodimer. [4Fe-4S] cluster serves as cofactor. It depends on [2Fe-2S] cluster as a cofactor.

It catalyses the reaction (4R,5S)-dethiobiotin + (sulfur carrier)-SH + 2 reduced [2Fe-2S]-[ferredoxin] + 2 S-adenosyl-L-methionine = (sulfur carrier)-H + biotin + 2 5'-deoxyadenosine + 2 L-methionine + 2 oxidized [2Fe-2S]-[ferredoxin]. Its pathway is cofactor biosynthesis; biotin biosynthesis; biotin from 7,8-diaminononanoate: step 2/2. Its function is as follows. Catalyzes the conversion of dethiobiotin (DTB) to biotin by the insertion of a sulfur atom into dethiobiotin via a radical-based mechanism. In Staphylococcus haemolyticus (strain JCSC1435), this protein is Biotin synthase.